A 534-amino-acid polypeptide reads, in one-letter code: Inorganic phosphate transporter 1-4 (534 aa).

Residues 1-24 (MAREQLQVLNALDVAKTQWYHFTA) are Cytoplasmic-facing. A helical membrane pass occupies residues 25-45 (IIIAGMGFFTDAYDLFCISLV). Topologically, residues 46 to 70 (TKLLGRIYYHVEGAQKPGTLPPNVA) are extracellular. A helical membrane pass occupies residues 71-91 (AAVNGVAFCGTLAGQLFFGWL). Residues 92–99 (GDKLGRKK) are Cytoplasmic-facing. The chain crosses the membrane as a helical span at residues 100-120 (VYGMTLMVMVLCSIASGLSFG). Residues 121–131 (HEPKAVMATLC) are Extracellular-facing. A helical transmembrane segment spans residues 132–152 (FFRFWLGFGIGGDYPLSATIM). Topologically, residues 153–161 (SEYANKKTR) are cytoplasmic. A helical transmembrane segment spans residues 162–182 (GAFVSAVFAMQGFGIMAGGIF). Residues 183–211 (AIIISSAFEAKFPSPAYADDALGSTIPQA) lie on the Extracellular side of the membrane. The helical transmembrane segment at 212-232 (DLVWRIILMAGAIPAAMTYYS) threads the bilayer. Residues 233-293 (RSKMPETARY…GLFSKEFMSR (61 aa)) lie on the Cytoplasmic side of the membrane. A helical membrane pass occupies residues 294 to 314 (HGLHLLGTTSTWFLLDIAFYS). Over 315–349 (QNLFQKDIFSAIGWIPPAQSMNAIQEVFKIARAQT) the chain is Extracellular. A helical transmembrane segment spans residues 350–370 (LIALCSTVPGYWFTVAFIDVI). Topologically, residues 371–372 (GR) are cytoplasmic. A helical membrane pass occupies residues 373 to 393 (FAIQMMGFFFMTVFMFALAIP). Over 394 to 403 (YNHWTHKENR) the chain is Extracellular. A helical transmembrane segment spans residues 404-424 (IGFVIMYSLTFFFANFGPNAT). Residues 425–442 (TFVVPAEIFPARFRSTCH) are Cytoplasmic-facing. Residues 443 to 463 (GISAASGKLGAMVGAFGFLYL) form a helical membrane-spanning segment. The Extracellular portion of the chain corresponds to 464–484 (AQNPDKDKTDAGYPPGIGVRN). Residues 485 to 505 (SLIVLGVVNFLGILFTFLVPE) form a helical membrane-spanning segment. The Cytoplasmic segment spans residues 506–534 (SKGKSLEEMSGENEDNENSNNDSRTVPIV). Residues 512-534 (EEMSGENEDNENSNNDSRTVPIV) form a disordered region. Phosphoserine occurs at positions 524 and 528.

Belongs to the major facilitator superfamily. Phosphate:H(+) symporter (TC 2.A.1.9) family. In terms of assembly, interacts with NLA. Ubiquitinated by NLA. Ubiquitination of PHT1-4 leads to its degradation by the proteasome. Mostly expressed in roots, in tissues connecting the lateral roots to the primary root. Also present in flowers, in senescing anther filaments and in the abscission zone at the base of siliques. Expressed in hydathodes and axillary buds, and in some senescing leaves. After Pi starvation, localized in all cells of undifferentiated root segments, including root tips and root hairs, and in the epidermis, cortex and stellar regions of mature root segments.

It localises to the cell membrane. In terms of biological role, high-affinity transporter for external inorganic phosphate. Acts as a H(+):phosphate symporter in both low- and high-Pi conditions. Confers sensitivity to arsenate. In Arabidopsis thaliana (Mouse-ear cress), this protein is Inorganic phosphate transporter 1-4 (PHT1-4).